Consider the following 273-residue polypeptide: Rho GTPase-activating protein gacB (273 aa).

Residues 1–192 (MTDQTLRLEN…YLISHFNEIF (192 aa)) form the Rho-GAP domain.

The protein localises to the cytoplasm. Rho GTPase-activating protein involved in the signal transduction pathway. The chain is Rho GTPase-activating protein gacB (gacB) from Dictyostelium discoideum (Social amoeba).